The chain runs to 291 residues: ATP synthase gamma chain (291 aa).

The protein belongs to the ATPase gamma chain family. As to quaternary structure, F-type ATPases have 2 components, CF(1) - the catalytic core - and CF(0) - the membrane proton channel. CF(1) has five subunits: alpha(3), beta(3), gamma(1), delta(1), epsilon(1). CF(0) has three main subunits: a, b and c.

It is found in the cell inner membrane. Functionally, produces ATP from ADP in the presence of a proton gradient across the membrane. The gamma chain is believed to be important in regulating ATPase activity and the flow of protons through the CF(0) complex. The chain is ATP synthase gamma chain from Persephonella marina (strain DSM 14350 / EX-H1).